Reading from the N-terminus, the 186-residue chain is Peptidyl-tRNA hydrolase (186 aa).

Tyr-14 contributes to the tRNA binding site. His-19 (proton acceptor) is an active-site residue. Residues Phe-64, Asn-66, and Asn-112 each contribute to the tRNA site.

Belongs to the PTH family. In terms of assembly, monomer.

The protein localises to the cytoplasm. The catalysed reaction is an N-acyl-L-alpha-aminoacyl-tRNA + H2O = an N-acyl-L-amino acid + a tRNA + H(+). Its function is as follows. Hydrolyzes ribosome-free peptidyl-tRNAs (with 1 or more amino acids incorporated), which drop off the ribosome during protein synthesis, or as a result of ribosome stalling. Catalyzes the release of premature peptidyl moieties from peptidyl-tRNA molecules trapped in stalled 50S ribosomal subunits, and thus maintains levels of free tRNAs and 50S ribosomes. In Listeria monocytogenes serotype 4a (strain HCC23), this protein is Peptidyl-tRNA hydrolase.